Reading from the N-terminus, the 360-residue chain is GDSL esterase/lipase At1g06990 (360 aa).

A signal peptide spans methionine 1–alanine 22. 2 N-linked (GlcNAc...) asparagine glycosylation sites follow: asparagine 26 and asparagine 31. The active-site Nucleophile is serine 44. N-linked (GlcNAc...) asparagine glycans are attached at residues asparagine 73, asparagine 126, and asparagine 272. Catalysis depends on residues aspartate 335 and histidine 338.

Belongs to the 'GDSL' lipolytic enzyme family.

It is found in the secreted. The sequence is that of GDSL esterase/lipase At1g06990 from Arabidopsis thaliana (Mouse-ear cress).